The following is a 326-amino-acid chain: Probable pectate lyase B (326 aa).

Residues 1–15 (MRVTAILTLATIAIA) form the signal peptide. The Ca(2+) site is built by Asp133, Asp162, and Asp166. Arg219 is an active-site residue.

Belongs to the polysaccharide lyase 1 family. It depends on Ca(2+) as a cofactor.

Its subcellular location is the secreted. It carries out the reaction Eliminative cleavage of (1-&gt;4)-alpha-D-galacturonan to give oligosaccharides with 4-deoxy-alpha-D-galact-4-enuronosyl groups at their non-reducing ends.. In terms of biological role, pectinolytic enzyme consist of four classes of enzymes: pectin lyase, polygalacturonase, pectin methylesterase and rhamnogalacturonase. Among pectinolytic enzymes, pectin lyase is the most important in depolymerization of pectin, since it cleaves internal glycosidic bonds of highly methylated pectins. Favors pectate, the anion, over pectin, the methyl ester. In Aspergillus flavus (strain ATCC 200026 / FGSC A1120 / IAM 13836 / NRRL 3357 / JCM 12722 / SRRC 167), this protein is Probable pectate lyase B (plyB).